A 574-amino-acid chain; its full sequence is Frizzled and smoothened-like protein G (574 aa).

An N-terminal signal peptide occupies residues 1–19; sequence MKSIIFITFFIFFLKKLNG. The Extracellular segment spans residues 20 to 246; it reads LPNGYGVGLV…EKWNQIENLS (227 aa). The region spanning 30 to 181 is the FZ domain; sequence DPNGQCMNYI…GLYEVPCFNP (152 aa). 4 disulfides stabilise this stretch: Cys-35–Cys-109, Cys-48–Cys-102, Cys-91–Cys-138, and Cys-127–Cys-178. N-linked (GlcNAc...) asparagine glycosylation is found at Asn-119, Asn-161, Asn-187, Asn-206, Asn-233, and Asn-244. A helical membrane pass occupies residues 247-267; that stretch reads KVLSTISFVCSIYNILSFGIL. The Cytoplasmic segment spans residues 268–273; it reads KKKKTK. Residues 274-294 traverse the membrane as a helical segment; the sequence is YTICISALSASVALINLGDII. Over 295–324 the chain is Extracellular; the sequence is KIGVGYEKVLCPEPGRFATQVDDPLCGLTA. The chain crosses the membrane as a helical span at residues 325-345; that stretch reads ALFHVGICSTVLWTTTMAIYL. Residues 346 to 358 are Cytoplasmic-facing; that stretch reads YSAIKNIKLFKFR. The helical transmembrane segment at 359-379 threads the bilayer; it reads YFIIFNTGFSLTSLIIAASAS. Residues 380–401 lie on the Extracellular side of the membrane; the sequence is KFEAGTGSIECWIRDRWYSICL. Residues 402 to 422 form a helical membrane-spanning segment; sequence FWLPCGICLLIGTICIASVIV. Residues 423 to 445 are Cytoplasmic-facing; sequence EIYKVSKNIKLSESETIMRQIKP. The chain crosses the membrane as a helical span at residues 446–466; the sequence is IISVILVSGSFTYLFIIFFDI. Residues 467–502 are Extracellular-facing; that stretch reads ERNFGGYRSAVTDYVLCLLNSTDNGIECHTSGPSYN. N-linked (GlcNAc...) asparagine glycosylation is present at Asn-486. The chain crosses the membrane as a helical span at residues 503-523; that stretch reads PYFMFYFFMRFFGILFFLIYG. Residues 524-574 are Cytoplasmic-facing; that stretch reads TSKNARDSWYELFIKIKVSLSETSSTISNNSGGGSSQQKQQQQNEIKLEKI. Positions 550 to 568 are enriched in low complexity; sequence ISNNSGGGSSQQKQQQQNE. The interval 550–574 is disordered; that stretch reads ISNNSGGGSSQQKQQQQNEIKLEKI.

The protein belongs to the G-protein coupled receptor Fz/Smo family.

The protein resides in the membrane. In Dictyostelium discoideum (Social amoeba), this protein is Frizzled and smoothened-like protein G (fslG).